Reading from the N-terminus, the 822-residue chain is Ras GTPase-activating-like protein rgaA (822 aa).

Residues 1–36 (MNKEEYSDISDSESEEVHETNNHNEHEHEEEDDTPE) are disordered. The span at 15-27 (EEVHETNNHNEHE) shows a compositional bias: basic and acidic residues. Residues 104 to 152 (EDKESDWIAEIQELKRNLVSEVRRNHTLERDLNRLDKRIALLIKNRGNI) are a coiled coil. The tract at residues 161–822 (GLKAPKHKGD…IHLLNKLFLY (662 aa)) is required for interaction to rac1A. The Ras-GAP domain maps to 234–477 (FLLLSLYRLS…GDIKNYLQEI (244 aa)).

As to quaternary structure, heterotetramer. Quaternary complex with activated rac1A, ctxA and ctxB. Interacts directly with rac1A and ctxA. Preferentially interacts with activated forms of rac1A, rac1B and rac1C. Interacts with racE.

The protein localises to the cytoplasm. Its subcellular location is the cell cortex. It localises to the cleavage furrow. Its function is as follows. Part of signaling pathway that is required for completion of cytokinesis. gapA and rgaA control cortexillin localization to the cleavage furrow and hence may be involved in cleavage of the midbody in the final stage of cytokinesis by regulating the actin cytoskeleton. Forms a complex by linking activated rac1A to ctxA. Assembly of this complex is necessary for the recruitment of cortexillin to the midzone of a dividing cell. Overexpression leads to the suppression of the formation of cellular projections containing F-actin and to a defect in cytokinesis. The sequence is that of Ras GTPase-activating-like protein rgaA (rgaA) from Dictyostelium discoideum (Social amoeba).